A 198-amino-acid chain; its full sequence is Large ribosomal subunit protein uL24c (198 aa).

Residues 1–50 (MATMSALQSSFTSLSLSPSSSFLGQRLISPISLSVTSPVKPAENPCLVLA) constitute a chloroplast transit peptide.

Belongs to the universal ribosomal protein uL24 family. In terms of assembly, part of the 50S ribosomal subunit.

The protein localises to the plastid. The protein resides in the chloroplast. One of two assembly initiator proteins, it binds directly to the 5'-end of the 23S rRNA, where it nucleates assembly of the 50S subunit. Required for optimal plastid performance in terms of photosynthesis and growth. Required for the translation of plastid mRNAs. Plays a critical role in biosynthesis of thylakoid membrane proteins encoded by chloroplast genes. This chain is Large ribosomal subunit protein uL24c (RPL24), found in Arabidopsis thaliana (Mouse-ear cress).